The sequence spans 272 residues: MKVIKTLSIINFFIFVTFNIKNESKYSNTFINNAYNMSIRRSMAESKPSTGAGGSAGGSAGGSAGGSAGGSAGGSAGSGDGNGADAEGSSSTPATTTTTKTTTTTTTTNDAEASTSTSSENPNHKNAETNPKGKGEVQEPNQANKETQNNSNVQQDSQTKSNVPPTQDADTKSPTAQPEQAENSAPTAEQTESPELQSAPENKGTGQHGHMHGSRNNHPQNTSDSQKECTDGNKENCGAATSLLNNSSNIASINKFVVLISATLVLSFAIFI.

The N-terminal stretch at 1 to 20 (MKVIKTLSIINFFIFVTFNI) is a signal peptide. Residues asparagine 22 and asparagine 36 are each glycosylated (N-linked (GlcNAc...) asparagine). The tract at residues 44–198 (AESKPSTGAG…EQTESPELQS (155 aa)) is polymorphic region. A disordered region spans residues 45-233 (ESKPSTGAGG…DSQKECTDGN (189 aa)). Positions 51-82 (GAGGSAGGSAGGSAGGSAGGSAGGSAGSGDGN) are enriched in gly residues. Tandem repeats lie at residues 53 to 56 (GGSA), 57 to 60 (GGSA), 61 to 64 (GGSA), 65 to 68 (GGSA), 69 to 72 (GGSA), and 73 to 76 (GGSA). Residues 53 to 76 (GGSAGGSAGGSAGGSAGGSAGGSA) form a 6 X 4 AA tandem repeats of G-G-S-A region. The span at 83–119 (GADAEGSSSTPATTTTTKTTTTTTTTNDAEASTSTSS) shows a compositional bias: low complexity. The span at 122 to 137 (PNHKNAETNPKGKGEV) shows a compositional bias: basic and acidic residues. Polar residues-rich tracts occupy residues 139–165 (EPNQ…NVPP) and 172–200 (KSPT…QSAP). N-linked (GlcNAc...) asparagine glycosylation is present at asparagine 149. A glycan (N-linked (GlcNAc...) asparagine) is linked at asparagine 221. Cysteines 229 and 237 form a disulfide. N-linked (GlcNAc...) asparagine glycosylation is found at asparagine 245 and asparagine 246. Asparagine 246 carries GPI-anchor amidated asparagine lipidation. Residues 247–272 (SSNIASINKFVVLISATLVLSFAIFI) constitute a propeptide, removed in mature form.

It is found in the cell membrane. Its function is as follows. May play a role in the merozoite attachment to the erythrocyte. This Plasmodium falciparum (isolate 3D7) protein is Merozoite surface protein 2.